We begin with the raw amino-acid sequence, 208 residues long: MTGGSVLKDRDRLGRIAVFVACLLPLVWYGARFVGGDLGANPIEAFTRKLGEWGLIFLLASLAATPARLLWGWTFPLRRRRMVGLFAFFYVCLHLLSYIGLDQFFDWGAIWADIVKRTYITVGMAALLLLVPLAVTSTRGMVRRLGGKRWIALHRLVYPAAVLGVLHYMLMVKADLSEPLIFAGILGLLLAVRLVPAVRRRRSGRAPS.

The next 6 helical transmembrane spans lie at 16–36 (IAVF…FVGG), 53–73 (WGLI…LWGW), 82–102 (MVGL…IGLD), 118–138 (TYIT…VTST), 156–176 (LVYP…KADL), and 178–198 (EPLI…VPAV).

This sequence belongs to the MsrQ family. In terms of assembly, heterodimer of a catalytic subunit (MsrP) and a heme-binding subunit (MsrQ). The cofactor is FMN. Requires heme b as cofactor.

Its subcellular location is the cell inner membrane. Part of the MsrPQ system that repairs oxidized periplasmic proteins containing methionine sulfoxide residues (Met-O), using respiratory chain electrons. Thus protects these proteins from oxidative-stress damage caused by reactive species of oxygen and chlorine generated by the host defense mechanisms. MsrPQ is essential for the maintenance of envelope integrity under bleach stress, rescuing a wide series of structurally unrelated periplasmic proteins from methionine oxidation. MsrQ provides electrons for reduction to the reductase catalytic subunit MsrP, using the quinone pool of the respiratory chain. The polypeptide is Protein-methionine-sulfoxide reductase heme-binding subunit MsrQ (Rhodospirillum rubrum (strain ATCC 11170 / ATH 1.1.1 / DSM 467 / LMG 4362 / NCIMB 8255 / S1)).